Consider the following 159-residue polypeptide: Ribosomal RNA large subunit methyltransferase H (159 aa).

2 residues coordinate S-adenosyl-L-methionine: L76 and G108.

This sequence belongs to the RNA methyltransferase RlmH family. Homodimer.

The protein localises to the cytoplasm. The catalysed reaction is pseudouridine(1915) in 23S rRNA + S-adenosyl-L-methionine = N(3)-methylpseudouridine(1915) in 23S rRNA + S-adenosyl-L-homocysteine + H(+). Its function is as follows. Specifically methylates the pseudouridine at position 1915 (m3Psi1915) in 23S rRNA. In Limosilactobacillus fermentum (strain NBRC 3956 / LMG 18251) (Lactobacillus fermentum), this protein is Ribosomal RNA large subunit methyltransferase H.